The sequence spans 205 residues: DNA-directed RNA polymerase RPB5 homolog (205 aa).

This sequence belongs to the archaeal RpoH/eukaryotic RPB5 RNA polymerase subunit family. As to quaternary structure, part of the viral DNA-directed RNA polymerase that consists of 8 polII-like subunits (RPB1, RPB2, RPB3, RPB5, RPB6, RPB7, RPB9, RPB10), a capping enzyme and a termination factor.

It is found in the host cytoplasm. The protein localises to the virion. Component of the DNA-directed RNA polymerase (RNAP) that catalyzes the transcription in the cytoplasm of viral DNA into RNA using the four ribonucleoside triphosphates as substrates. The chain is DNA-directed RNA polymerase RPB5 homolog from Ornithodoros (relapsing fever ticks).